The primary structure comprises 551 residues: MNLWQQNYDPAGNIWLSSLIASLPILFFFFALIKLKLKGYVAASWTVAIALAVALLFYKMPVANALASVVYGFFYGLWPIAWIIIAAVFVYKISVKTGQFDIIRSSILSITPDQRLQMLIVGFCFGAFLEGAAGFGAPVAITAALLVGLGFKPLYAAGLCLIVNTAPVAFGAMGIPILVAGQVTGIDSFEIGQMVGRQLPFMTIIVLFWIMAIMDGWRGIKETWPAVVVAGGSFAIAQYLSSNFIGPELPDIISSLVSLLCLTLFLKRWQPVRVFRFGDLGASQVDMTLAHTGYTAGQVLRAWTPFLFLTATVTLWSIPPFKALFASGGALYEWVINIPVPYLDKLVARMPPVVSEATAYAAVFKFDWFSATGTAILFAALLSIVWLKMKPSDAISTFGSTLKELALPIYSIGMVLAFAFISNYSGLSSTLALALAHTGHAFTFFSPFLGWLGVFLTGSDTSSNALFAALQATAAQQIGVSDLLLVAANTTGGVTGKMISPQSIAIACAAVGLVGKESDLFRFTVKHSLIFTCMVGVITTLQAYVLTWMIP.

Transmembrane regions (helical) follow at residues 13–33, 37–57, 70–90, 131–151, 159–179, 194–214, 244–264, 366–386, 405–425, 438–458, 494–514, and 530–550; these read NIWL…FALI, LKGY…ALLF, VYGF…AVFV, GAAG…GLGF, LCLI…PILV, MVGR…MAIM, FIGP…CLTL, FDWF…SIVW, LALP…SNYS, TGHA…FLTG, VTGK…VGLV, and IFTC…TWMI.

The protein belongs to the lactate permease family.

The protein resides in the cell inner membrane. It carries out the reaction (S)-lactate(in) + H(+)(in) = (S)-lactate(out) + H(+)(out). The catalysed reaction is (R)-lactate(in) + H(+)(in) = (R)-lactate(out) + H(+)(out). It catalyses the reaction glycolate(in) + H(+)(in) = glycolate(out) + H(+)(out). In terms of biological role, uptake of L-lactate across the membrane. Can also transport D-lactate and glycolate. Seems to be driven by a proton motive force. In Escherichia coli O6:H1 (strain CFT073 / ATCC 700928 / UPEC), this protein is L-lactate permease (lldP).